We begin with the raw amino-acid sequence, 245 residues long: 1-(5-phosphoribosyl)-5-[(5-phosphoribosylamino)methylideneamino] imidazole-4-carboxamide isomerase (245 aa).

The active-site Proton acceptor is the Asp-8. The Proton donor role is filled by Asp-130.

Belongs to the HisA/HisF family.

It localises to the cytoplasm. It carries out the reaction 1-(5-phospho-beta-D-ribosyl)-5-[(5-phospho-beta-D-ribosylamino)methylideneamino]imidazole-4-carboxamide = 5-[(5-phospho-1-deoxy-D-ribulos-1-ylimino)methylamino]-1-(5-phospho-beta-D-ribosyl)imidazole-4-carboxamide. The protein operates within amino-acid biosynthesis; L-histidine biosynthesis; L-histidine from 5-phospho-alpha-D-ribose 1-diphosphate: step 4/9. The protein is 1-(5-phosphoribosyl)-5-[(5-phosphoribosylamino)methylideneamino] imidazole-4-carboxamide isomerase of Pseudomonas entomophila (strain L48).